We begin with the raw amino-acid sequence, 904 residues long: MLIKLLTKVFGSRNDRTLRRMQKVVDVINRMEPDIEKLTDTELRAKTDEFRERLAKGEVLENLIPEAFAVVREASKRVFGMRHFDVQLLGGMVLNERCIAEMRTGEGKTLTATLPAYLNALSGRGVHVVTVNDYLAQRDAENNRPLFEFLGLSIGINLPNMTAPAKRAAYAADITYGTNNEFGFDYLRDNMAFSPEERVQRQLHYALVDEVDSILIDEARTPLIISGPAEDSSEMYIRVNKLIPKLIRQEKEDSDSFQGEGHFSVDEKSRQVHLTERGLILIEQMLVEAGIMDEGESLYSPANIMLMHHVTAALRAHVLFTRDVDYIVKDGEVIIVDEHTGRTMQGRRWSDGLHQAVEAKEGVEIQNENQTLASITFQNYFRLYEKLAGMTGTADTEAFEFSSIYKLDTIVVPTNRPMIRKDLADLVYMTEQEKIGAIIEDIRERTANGQPVLVGTISIEKSEVVSAELTKAGIEHKVLNAKFHAMEAEIVSQAGQPGAVTIATNMAGRGTDIVLGGSWQSEIAALEDPTEEQIAAIKAAWQIRHDAVLASGGLHIIGTERHESRRIDNQLRGRAGRQGDAGSSRFYLSMEDALMRIFASDRVSGMMRKLGMKPGEAIEHPWVTKAIANAQRKVESRNFDIRKQLLEYDDVANDQRRAIYSQRNELLDVSDVSETINSIREDVFKTTIDSYIPTQSLEEMWDIEGLEQRLKNDFDLDMPIAKWLEDEPQLHEETLRERILQQAIETYQRKEEVVGIEMMRNFEKGVMLQTLDSLWKEHLAAMDYLRQGIHLRGYAQKDPKQEYKRESFAMFAAMLESLKYEVISVLSKVQVRMPEEVEALEVQRREEAERLARQQQLSHQTDNSALMSEEEVKVANSLERKVGRNDPCPCGSGKKYKQCHGRLQ.

Residues glutamine 87, 105–109 (GEGKT), and aspartate 512 contribute to the ATP site. Residues 851–870 (LARQQQLSHQTDNSALMSEE) form a disordered region. Residues cysteine 888, cysteine 890, cysteine 899, and histidine 900 each contribute to the Zn(2+) site.

This sequence belongs to the SecA family. Monomer and homodimer. Part of the essential Sec protein translocation apparatus which comprises SecA, SecYEG and auxiliary proteins SecDF-YajC and YidC. Zn(2+) is required as a cofactor.

It localises to the cell inner membrane. The protein localises to the cytoplasm. The catalysed reaction is ATP + H2O + cellular proteinSide 1 = ADP + phosphate + cellular proteinSide 2.. Functionally, part of the Sec protein translocase complex. Interacts with the SecYEG preprotein conducting channel. Has a central role in coupling the hydrolysis of ATP to the transfer of proteins into and across the cell membrane, serving both as a receptor for the preprotein-SecB complex and as an ATP-driven molecular motor driving the stepwise translocation of polypeptide chains across the membrane. This chain is Protein translocase subunit SecA, found in Yersinia pseudotuberculosis serotype O:1b (strain IP 31758).